We begin with the raw amino-acid sequence, 1101 residues long: Type II inositol polyphosphate 5-phosphatase 15 (1101 aa).

Over residues 31-40 the composition is skewed to low complexity; the sequence is RSAYSSSSSS. The disordered stretch occupies residues 31-54; it reads RSAYSSSSSSGDDESQPSVDDSNK. WD repeat units lie at residues 121 to 162, 180 to 219, 225 to 263, 403 to 432, 433 to 481, and 483 to 519; these read LRET…GSGR, FGSA…GIEE, AHRG…GKSL, DDSR…MRWD, GNGN…GGWV, and HSGP…PLDN. 2 catalytic regions span residues 749–765 and 828–843; these read DMVI…DDIT and KKRI…YRDN. Lys907 participates in a covalent cross-link: Glycyl lysine isopeptide (Lys-Gly) (interchain with G-Cter in ubiquitin).

It belongs to the inositol polyphosphate 5-phosphatase family. The cofactor is Mg(2+). In terms of tissue distribution, predominantly expressed in interfascicular fibers and vascular bundles. Expressed in seedlings, stems, roots and flowers. Expressed at lower level in mature leaves.

The catalysed reaction is a 1,2-diacyl-sn-glycero-3-phospho-(1D-myo-inositol-4,5-bisphosphate) + H2O = a 1,2-diacyl-sn-glycero-3-phospho-(1D-myo-inositol 4-phosphate) + phosphate. The enzyme catalyses a 1,2-diacyl-sn-glycero-3-phospho-(1D-myo-inositol-3,4,5-trisphosphate) + H2O = a 1,2-diacyl-sn-glycero-3-phospho-(1D-myo-inositol-3,4-bisphosphate) + phosphate. It catalyses the reaction 1D-myo-inositol 1,4,5-trisphosphate + H2O = 1D-myo-inositol 1,4-bisphosphate + phosphate. In terms of biological role, has phosphatase activity toward PtdIns(4,5)P2, PtdIns(3,4,5)P3 and Ins(1,4,5)P3. Has a higher substrate affinity toward PtdIns(4,5)P2. Required for secondary wall synthesis and actin organization in fiber cells. This Arabidopsis thaliana (Mouse-ear cress) protein is Type II inositol polyphosphate 5-phosphatase 15.